Here is a 519-residue protein sequence, read N- to C-terminus: Lysine 5,6-aminomutase alpha subunit (519 aa).

57–59 (DEV) serves as a coordination point for adenosylcob(III)alamin. Pyridoxal 5'-phosphate-binding positions include 187-192 (RTTGQS), serine 241, tyrosine 266, arginine 271, and asparagine 302.

This sequence belongs to the KamD family. In terms of assembly, heterotetramer of 2 alpha and 2 beta subunits. Adenosylcob(III)alamin serves as cofactor. It depends on pyridoxal 5'-phosphate as a cofactor.

The enzyme catalyses (3S)-3,6-diaminohexanoate = (3S,5S)-3,5-diaminohexanoate. The catalysed reaction is D-lysine = (2R,5S)-2,5-diaminohexanoate. The protein operates within amino-acid metabolism; lysine degradation. Rapidly inactivated in the presence of D-lysine and to a lesser extent in the absence of adenosylcobalamin (Adocbl). Activity is stable in the presence of Adocbl when D-lysine is absent. Adocbl imparts thermal stability at 37 degrees Celsius. Catalyzes the migration of the L-beta-lysine and D-lysine epsilon amino group to the delta carbon to produce 3,5-diaminohexanoate and 2,5-diaminohexanoate, respectively. This chain is Lysine 5,6-aminomutase alpha subunit (kamD), found in Acetoanaerobium sticklandii (strain ATCC 12662 / DSM 519 / JCM 1433 / CCUG 9281 / NCIMB 10654 / HF) (Clostridium sticklandii).